The sequence spans 688 residues: Glycine--tRNA ligase beta subunit (688 aa).

This sequence belongs to the class-II aminoacyl-tRNA synthetase family. In terms of assembly, tetramer of two alpha and two beta subunits.

The protein localises to the cytoplasm. It catalyses the reaction tRNA(Gly) + glycine + ATP = glycyl-tRNA(Gly) + AMP + diphosphate. The chain is Glycine--tRNA ligase beta subunit from Vibrio parahaemolyticus serotype O3:K6 (strain RIMD 2210633).